The following is a 191-amino-acid chain: Imidazoleglycerol-phosphate dehydratase (191 aa).

This sequence belongs to the imidazoleglycerol-phosphate dehydratase family.

It is found in the cytoplasm. It carries out the reaction D-erythro-1-(imidazol-4-yl)glycerol 3-phosphate = 3-(imidazol-4-yl)-2-oxopropyl phosphate + H2O. The protein operates within amino-acid biosynthesis; L-histidine biosynthesis; L-histidine from 5-phospho-alpha-D-ribose 1-diphosphate: step 6/9. This chain is Imidazoleglycerol-phosphate dehydratase, found in Methanosarcina mazei (strain ATCC BAA-159 / DSM 3647 / Goe1 / Go1 / JCM 11833 / OCM 88) (Methanosarcina frisia).